The sequence spans 517 residues: GMP synthase [glutamine-hydrolyzing] (517 aa).

Residues 11 to 202 (KIIVLDFGSQ…AFDVCGAKDN (192 aa)) form the Glutamine amidotransferase type-1 domain. Cys88 serves as the catalytic Nucleophile. Catalysis depends on residues His176 and Glu178. In terms of domain architecture, GMPS ATP-PPase spans 203-392 (WTMDDFIKLS…LGLPHDLVWR (190 aa)). An ATP-binding site is contributed by 230 to 236 (SGGVDSS).

Homodimer.

The enzyme catalyses XMP + L-glutamine + ATP + H2O = GMP + L-glutamate + AMP + diphosphate + 2 H(+). Its pathway is purine metabolism; GMP biosynthesis; GMP from XMP (L-Gln route): step 1/1. In terms of biological role, catalyzes the synthesis of GMP from XMP. The protein is GMP synthase [glutamine-hydrolyzing] of Lactobacillus delbrueckii subsp. bulgaricus (strain ATCC 11842 / DSM 20081 / BCRC 10696 / JCM 1002 / NBRC 13953 / NCIMB 11778 / NCTC 12712 / WDCM 00102 / Lb 14).